We begin with the raw amino-acid sequence, 205 residues long: Regulator of G-protein signaling 4 (205 aa).

3 S-palmitoyl cysteine lipidation sites follow: C2, C12, and C95. The region spanning 62-178 (SLENLISHEC…LKSRFYLDLV (117 aa)) is the RGS domain.

Post-translationally, palmitoylated on Cys-2 and/or Cys-12. Phosphorylated by cyclic GMP-dependent protein kinase.

In terms of biological role, inhibits signal transduction by increasing the GTPase activity of G protein alpha subunits thereby driving them into their inactive GDP-bound form. Activity on G(z)-alpha is inhibited by phosphorylation of the G-protein. Activity on G(z)-alpha and G(i)-alpha-1 is inhibited by palmitoylation of the G-protein. In Pongo abelii (Sumatran orangutan), this protein is Regulator of G-protein signaling 4 (RGS4).